We begin with the raw amino-acid sequence, 366 residues long: Carbamoyl phosphate synthase small chain (366 aa).

The segment at 1-171 (MKKRKLILED…KPYVVPGRGL (171 aa)) is CPSase. Residues serine 46, glycine 220, and glycine 222 each coordinate L-glutamine. The Glutamine amidotransferase type-1 domain occupies 172–359 (RVVMVDFGAK…LNLIKASKVK (188 aa)). The active-site Nucleophile is the cysteine 247. L-glutamine contacts are provided by leucine 248, glutamine 251, asparagine 289, and tyrosine 292. Active-site residues include histidine 332 and glutamate 334.

The protein belongs to the CarA family. As to quaternary structure, composed of two chains; the small (or glutamine) chain promotes the hydrolysis of glutamine to ammonia, which is used by the large (or ammonia) chain to synthesize carbamoyl phosphate. Tetramer of heterodimers (alpha,beta)4.

It carries out the reaction hydrogencarbonate + L-glutamine + 2 ATP + H2O = carbamoyl phosphate + L-glutamate + 2 ADP + phosphate + 2 H(+). The enzyme catalyses L-glutamine + H2O = L-glutamate + NH4(+). Its pathway is amino-acid biosynthesis; L-arginine biosynthesis; carbamoyl phosphate from bicarbonate: step 1/1. The protein operates within pyrimidine metabolism; UMP biosynthesis via de novo pathway; (S)-dihydroorotate from bicarbonate: step 1/3. In terms of biological role, small subunit of the glutamine-dependent carbamoyl phosphate synthetase (CPSase). CPSase catalyzes the formation of carbamoyl phosphate from the ammonia moiety of glutamine, carbonate, and phosphate donated by ATP, constituting the first step of 2 biosynthetic pathways, one leading to arginine and/or urea and the other to pyrimidine nucleotides. The small subunit (glutamine amidotransferase) binds and cleaves glutamine to supply the large subunit with the substrate ammonia. This is Carbamoyl phosphate synthase small chain from Oceanobacillus iheyensis (strain DSM 14371 / CIP 107618 / JCM 11309 / KCTC 3954 / HTE831).